A 202-amino-acid polypeptide reads, in one-letter code: Orotate phosphoribosyltransferase (202 aa).

5-phospho-alpha-D-ribose 1-diphosphate-binding positions include Arg94, Lys98, His100, and 120–128; that span reads EDLISTGGS. Ser124 contributes to the orotate binding site.

This sequence belongs to the purine/pyrimidine phosphoribosyltransferase family. PyrE subfamily. Homodimer. Mg(2+) serves as cofactor.

The catalysed reaction is orotidine 5'-phosphate + diphosphate = orotate + 5-phospho-alpha-D-ribose 1-diphosphate. It functions in the pathway pyrimidine metabolism; UMP biosynthesis via de novo pathway; UMP from orotate: step 1/2. Catalyzes the transfer of a ribosyl phosphate group from 5-phosphoribose 1-diphosphate to orotate, leading to the formation of orotidine monophosphate (OMP). The chain is Orotate phosphoribosyltransferase from Oceanobacillus iheyensis (strain DSM 14371 / CIP 107618 / JCM 11309 / KCTC 3954 / HTE831).